Here is a 1505-residue protein sequence, read N- to C-terminus: Probable serine/threonine-protein kinase DDB_G0280133 (1505 aa).

3 consecutive PAS domains span residues Asn-2–Gly-72, Arg-108–Gly-178, and Asp-215–His-284. Disordered stretches follow at residues Asp-282 to Ser-348 and Arg-398 to Tyr-533. Composition is skewed to low complexity over residues Gln-289 to Thr-314 and Ser-328 to Thr-344. Composition is skewed to basic and acidic residues over residues Arg-398 to Asn-407 and Glu-415 to Glu-430. A compositionally biased stretch (basic residues) spans His-431 to Asp-443. A compositionally biased stretch (low complexity) spans Asn-448–Ser-468. The span at Ser-479 to Ser-489 shows a compositional bias: basic residues. A compositionally biased stretch (low complexity) spans Ser-515–Ser-532. A Protein kinase domain is found at Tyr-542–Leu-805. ATP-binding positions include Leu-548–Val-556 and Lys-571. The active-site Proton acceptor is the Asp-684. A compositionally biased stretch (low complexity) spans Asn-855–Asn-960. Disordered regions lie at residues Asn-855–Gln-1048, Gln-1072–Gln-1091, and Gln-1181–Asn-1358. Residues Asn-903–Asn-939 adopt a coiled-coil conformation. A compositionally biased stretch (polar residues) spans Leu-961 to Tyr-974. 2 stretches are compositionally biased toward low complexity: residues Gln-975–His-1013 and Gln-1022–Gln-1048. The segment covering Gln-1072–Asn-1082 has biased composition (polar residues). Residues Ile-1125 to Asp-1189 are a coiled coil. A compositionally biased stretch (basic and acidic residues) spans Ser-1202–Asn-1271. A compositionally biased stretch (low complexity) spans Arg-1272 to Asn-1282. Composition is skewed to basic and acidic residues over residues Asn-1283–Lys-1301 and Asn-1313–Phe-1326. The span at Ser-1331–Arg-1347 shows a compositional bias: polar residues. Residues Phe-1399–Ile-1463 enclose the FHA domain.

It belongs to the protein kinase superfamily. CAMK Ser/Thr protein kinase family. SNF1 subfamily.

The catalysed reaction is L-seryl-[protein] + ATP = O-phospho-L-seryl-[protein] + ADP + H(+). It catalyses the reaction L-threonyl-[protein] + ATP = O-phospho-L-threonyl-[protein] + ADP + H(+). In Dictyostelium discoideum (Social amoeba), this protein is Probable serine/threonine-protein kinase DDB_G0280133.